The primary structure comprises 329 residues: GTP 3',8-cyclase (329 aa).

The Radical SAM core domain maps to 8–234 (AFARKFYYLR…QLRQRSDGPA (227 aa)). A GTP-binding site is contributed by Arg-17. Positions 24 and 28 each coordinate [4Fe-4S] cluster. Tyr-30 is an S-adenosyl-L-methionine binding site. Cys-31 is a binding site for [4Fe-4S] cluster. Arg-68 contacts GTP. Position 72 (Gly-72) interacts with S-adenosyl-L-methionine. GTP is bound at residue Thr-99. Ser-123 contacts S-adenosyl-L-methionine. Lys-160 is a GTP binding site. Met-194 contributes to the S-adenosyl-L-methionine binding site. Residues Cys-257 and Cys-260 each contribute to the [4Fe-4S] cluster site. Residue 262 to 264 (RLR) coordinates GTP. Cys-274 contributes to the [4Fe-4S] cluster binding site.

It belongs to the radical SAM superfamily. MoaA family. In terms of assembly, monomer and homodimer. The cofactor is [4Fe-4S] cluster.

The catalysed reaction is GTP + AH2 + S-adenosyl-L-methionine = (8S)-3',8-cyclo-7,8-dihydroguanosine 5'-triphosphate + 5'-deoxyadenosine + L-methionine + A + H(+). The protein operates within cofactor biosynthesis; molybdopterin biosynthesis. Catalyzes the cyclization of GTP to (8S)-3',8-cyclo-7,8-dihydroguanosine 5'-triphosphate. This chain is GTP 3',8-cyclase, found in Escherichia fergusonii (strain ATCC 35469 / DSM 13698 / CCUG 18766 / IAM 14443 / JCM 21226 / LMG 7866 / NBRC 102419 / NCTC 12128 / CDC 0568-73).